The following is a 347-amino-acid chain: Probable dual-specificity RNA methyltransferase RlmN (347 aa).

Glu-94 acts as the Proton acceptor in catalysis. Residues 100–334 (TETRTTACVS…AKVRHSRGKD (235 aa)) enclose the Radical SAM core domain. Cys-107 and Cys-339 are oxidised to a cystine. Residues Cys-114, Cys-118, and Cys-121 each coordinate [4Fe-4S] cluster. Residues 165-166 (GE), Ser-197, 220-222 (SLH), and Asn-296 contribute to the S-adenosyl-L-methionine site. The active-site S-methylcysteine intermediate is the Cys-339.

The protein belongs to the radical SAM superfamily. RlmN family. The cofactor is [4Fe-4S] cluster.

The protein resides in the cytoplasm. The catalysed reaction is adenosine(2503) in 23S rRNA + 2 reduced [2Fe-2S]-[ferredoxin] + 2 S-adenosyl-L-methionine = 2-methyladenosine(2503) in 23S rRNA + 5'-deoxyadenosine + L-methionine + 2 oxidized [2Fe-2S]-[ferredoxin] + S-adenosyl-L-homocysteine. It catalyses the reaction adenosine(37) in tRNA + 2 reduced [2Fe-2S]-[ferredoxin] + 2 S-adenosyl-L-methionine = 2-methyladenosine(37) in tRNA + 5'-deoxyadenosine + L-methionine + 2 oxidized [2Fe-2S]-[ferredoxin] + S-adenosyl-L-homocysteine. Its function is as follows. Specifically methylates position 2 of adenine 2503 in 23S rRNA and position 2 of adenine 37 in tRNAs. The protein is Probable dual-specificity RNA methyltransferase RlmN of Flavobacterium psychrophilum (strain ATCC 49511 / DSM 21280 / CIP 103535 / JIP02/86).